The primary structure comprises 332 residues: MSLKEKLIENVHKEEHPQAHNKITVVGVGAVGMACAISILMKDLADELALVDVVEDKLKGEMLDLQHGSLFLRTPKIVSGKDYAVTAHSKLVIITAGARQQEGEFRLNLVQRNVNIFKFIIPNVVKYSPHCKLLVVSNPVDILTYVAWKISGFPKHRVIGSGCNLDSARFRHLLGERLGIHPLSCHSWIVGEHGDSSVPVWSGVNVAGVCLKELHPELGTDGDKENWKEVHKQVVDSAYEVIKLKGYTSWAIGLSVADLAETIMKNLRRVHPISTMVKGMHGVKDDVFLSVPCVLGSSGITDVIKMTLKSEEEDKLRKSADTLWGIQKELQF.

Residues 29–57 and arginine 99 each bind NAD(+); that span reads GAVGMACAISILMKDLADELALVDVVEDK. Substrate contacts are provided by arginine 106, asparagine 138, and arginine 169. Asparagine 138 contacts NAD(+). The active-site Proton acceptor is the histidine 193. Threonine 248 is a substrate binding site.

This sequence belongs to the LDH/MDH superfamily. LDH family. As to quaternary structure, homotetramer.

The protein localises to the cytoplasm. The enzyme catalyses (S)-lactate + NAD(+) = pyruvate + NADH + H(+). It functions in the pathway fermentation; pyruvate fermentation to lactate; (S)-lactate from pyruvate: step 1/1. In terms of biological role, interconverts simultaneously and stereospecifically pyruvate and lactate with concomitant interconversion of NADH and NAD(+). The chain is L-lactate dehydrogenase A chain (LDHA) from Python regius (Ball python).